The sequence spans 423 residues: Phosphoribosylamine--glycine ligase (423 aa).

Residues 107–312 (KDLCARYDIP…LLPILYATAT (206 aa)) form the ATP-grasp domain. 133 to 193 (VRAQGAPIVI…EAFLDGEEAS (61 aa)) is a binding site for ATP. Residues E282 and N284 each contribute to the Mg(2+) site.

The protein belongs to the GARS family. The cofactor is Mg(2+). Requires Mn(2+) as cofactor.

The catalysed reaction is 5-phospho-beta-D-ribosylamine + glycine + ATP = N(1)-(5-phospho-beta-D-ribosyl)glycinamide + ADP + phosphate + H(+). It participates in purine metabolism; IMP biosynthesis via de novo pathway; N(1)-(5-phospho-D-ribosyl)glycinamide from 5-phospho-alpha-D-ribose 1-diphosphate: step 2/2. This Agrobacterium fabrum (strain C58 / ATCC 33970) (Agrobacterium tumefaciens (strain C58)) protein is Phosphoribosylamine--glycine ligase.